The following is a 1481-amino-acid chain: Cystic fibrosis transmembrane conductance regulator (1481 aa).

The Cytoplasmic segment spans residues 1 to 77 (MQRSPLEKAS…KLINALRRCF (77 aa)). The chain crosses the membrane as a helical span at residues 78–98 (FWRFMFYGIILYLGEVTKAVQ). An ABC transmembrane type-1 1 domain is found at 81 to 365 (FMFYGIILYL…WAVQTWYDSL (285 aa)). Over 99–122 (PLLLGRIIASYDPDNKVERSIAIY) the chain is Extracellular. Residues 123–146 (LGIGLCLLFIVRTLLLHPAIFGLH) form a helical membrane-spanning segment. Residues 147-195 (HIGMQMRIAMFSLIYKKTLKLSSRVLDKISIGQLVSLLSNNLNKFDEGL) are Cytoplasmic-facing. Residues 196–216 (ALAHFVWIAPLQVTLLMGLLW) traverse the membrane as a helical segment. Over 217-222 (ELLQAF) the chain is Extracellular. A helical transmembrane segment spans residues 223-243 (TFCGLAFLIVLALLQAGLGKM). The Cytoplasmic segment spans residues 244-298 (MMKYRDQRAGKINERLVITSEMIENIQSVKAYCWEEAMEKIIENLRQTELKLTRK). Residues 299–319 (AAYVRYLNSSAFFFSGFFVVF) form a helical membrane-spanning segment. Residues 320–339 (LSVLPYALLKGIILRKIFTT) are Extracellular-facing. A helical transmembrane segment spans residues 340 to 358 (ISFCIVLRMAVTRQFPWAV). Residues 359-858 (QTWYDSLGAI…YLRYITVHKS (500 aa)) lie on the Cytoplasmic side of the membrane. ATP contacts are provided by residues Trp401, 457–464 (GSTGAGKT), and Gln492. In terms of domain architecture, ABC transporter 1 spans 423-645 (NGDNSLFFSN…RPDFSSKLMG (223 aa)). A lipid anchor (S-palmitoyl cysteine) is attached at Cys523. A Phosphoserine modification is found at Ser548. Residues 653 to 831 (TAERRNSIIT…EEINEEDLRD (179 aa)) are disordered R region. 2 positions are modified to phosphoserine; by PKA: Ser659 and Ser669. Ser685 carries the post-translational modification Phosphoserine; by PKC. Lys687 is covalently cross-linked (Glycyl lysine isopeptide (Lys-Gly) (interchain with G-Cter in ubiquitin)). A Phosphoserine; by PKA modification is found at Ser699. Ser711 carries the phosphoserine modification. A Phosphothreonine modification is found at Thr716. Phosphoserine; by PKA is present on residues Ser736 and Ser767. Phosphoserine; by PKC is present on Ser790. Ser795 and Ser813 each carry phosphoserine; by PKA. The helical transmembrane segment at 859-879 (LMFVLIWCLVVFLVEVAASLV) threads the bilayer. The 297-residue stretch at 859 to 1155 (LMFVLIWCLV…AVNSSIDVDS (297 aa)) folds into the ABC transmembrane type-1 2 domain. Over 880-918 (VLCLFPKIFFQDKGNSTKSANNSYAVIITSTSSYYIFYI) the chain is Extracellular. N-linked (GlcNAc...) asparagine glycosylation is found at Asn894 and Asn900. A discontinuously helical transmembrane segment spans residues 919–939 (YVGVADTLLALGLFRGLPLVH). Residues 940–990 (TLITVSKTLHHKMLQSVLQAPMSTLNTLKTGGILNRFSKDIAVLDDLLPLT) lie on the Cytoplasmic side of the membrane. Residues 991 to 1011 (IFDFVQLLLIVIGAVVVVSVL) form a helical membrane-spanning segment. Over 1012 to 1013 (QP) the chain is Extracellular. Residues 1014 to 1034 (YIFLATVPVIAAFILLRAYFL) form a helical membrane-spanning segment. Residues 1035–1095 (HTSQQLKQLE…TANWFLYLST (61 aa)) are Cytoplasmic-facing. The chain crosses the membrane as a helical span at residues 1096–1116 (LRWFQMRIEMIFVIFFIAVTF). Residues 1117 to 1130 (ISILTTGEGEGRVG) are Extracellular-facing. Residues 1131–1151 (IILTLAMNIMGTLQWAVNSSI) traverse the membrane as a helical segment. The Cytoplasmic segment spans residues 1152–1481 (DVDSLMRSVS…TEEEVQETKL (330 aa)). The 234-residue stretch at 1211–1444 (MTVKDLTAKY…KSLFRQAISP (234 aa)) folds into the ABC transporter 2 domain. ATP is bound by residues Tyr1220 and 1245–1252 (GRTGSGKS). An interaction with GORASP2 region spans residues 1387-1481 (RTLKQAFANC…TEEEVQETKL (95 aa)). Cys1396 carries S-palmitoyl cysteine lipidation. The segment at 1453-1481 (HRNSSRQRSRSNIAALKEETEEEVQETKL) is disordered. Ser1457 is modified (phosphoserine). Residues 1471–1481 (ETEEEVQETKL) are compositionally biased toward acidic residues. Residues 1479 to 1481 (TKL) carry the PDZ-binding motif.

Belongs to the ABC transporter superfamily. ABCC family. CFTR transporter (TC 3.A.1.202) subfamily. Monomer; does not require oligomerization for channel activity. May form oligomers in the membrane. Interacts with SLC26A3, SLC26A6 and NHERF1. Interacts with SHANK2. Interacts with MYO6. Interacts (via C-terminus) with GOPC (via PDZ domain); this promotes CFTR internalization and thereby decreases channel activity. Interacts with SLC4A7 through NHERF1. Found in a complex with MYO5B and RAB11A. Interacts with ANO1. Interacts with SLC26A8. Interacts with AHCYL1; the interaction increases CFTR activity. Interacts with CSE1L. The core-glycosylated form interacts with GORASP2 (via PDZ GRASP-type 1 domain) in respone to ER stress. Interacts with MARCHF2; the interaction leads to CFTR ubiqtuitination and degradation. Interacts with ADGRG2. Post-translationally, N-glycosylated. In terms of processing, phosphorylated; cAMP treatment promotes phosphorylation and activates the channel. Dephosphorylation decreases the ATPase activity (in vitro). Phosphorylation at PKA sites activates the channel. Phosphorylation at PKC sites enhances the response to phosphorylation by PKA. Phosphorylated by AMPK; this inhibits channel activity. Ubiquitinated, leading to its degradation in the lysosome. Deubiquitination by USP10 in early endosomes enhances its endocytic recycling to the cell membrane. Ubiquitinated by RNF185 during ER stress. Ubiquitinated by MARCHF2.

It is found in the apical cell membrane. Its subcellular location is the early endosome membrane. The protein resides in the cell membrane. It localises to the recycling endosome membrane. The protein localises to the endoplasmic reticulum membrane. It is found in the nucleus. It carries out the reaction ATP + H2O + closed Cl(-) channel = ADP + phosphate + open Cl(-) channel.. The enzyme catalyses chloride(in) = chloride(out). It catalyses the reaction hydrogencarbonate(in) = hydrogencarbonate(out). The catalysed reaction is ATP + H2O = ADP + phosphate + H(+). In terms of biological role, epithelial ion channel that plays an important role in the regulation of epithelial ion and water transport and fluid homeostasis. Mediates the transport of chloride ions across the cell membrane. Possesses an intrinsic ATPase activity and utilizes ATP to gate its channel; the passive flow of anions through the channel is gated by cycles of ATP binding and hydrolysis by the ATP-binding domains. The ion channel is also permeable to HCO(3)(-); selectivity depends on the extracellular chloride concentration. Exerts its function also by modulating the activity of other ion channels and transporters. Contributes to the regulation of the pH and the ion content of the epithelial fluid layer. Modulates the activity of the epithelial sodium channel (ENaC) complex, in part by regulating the cell surface expression of the ENaC complex. May regulate bicarbonate secretion and salvage in epithelial cells by regulating the transporter SLC4A7. Can inhibit the chloride channel activity of ANO1. Plays a role in the chloride and bicarbonate homeostasis during sperm epididymal maturation and capacitation. This is Cystic fibrosis transmembrane conductance regulator from Bos taurus (Bovine).